Consider the following 1171-residue polypeptide: DNA-directed RNA polymerase subunit beta (1171 aa).

It belongs to the RNA polymerase beta chain family. In terms of assembly, the RNAP catalytic core consists of 2 alpha, 1 beta, 1 beta' and 1 omega subunit. When a sigma factor is associated with the core the holoenzyme is formed, which can initiate transcription.

It catalyses the reaction RNA(n) + a ribonucleoside 5'-triphosphate = RNA(n+1) + diphosphate. In terms of biological role, DNA-dependent RNA polymerase catalyzes the transcription of DNA into RNA using the four ribonucleoside triphosphates as substrates. In Kineococcus radiotolerans (strain ATCC BAA-149 / DSM 14245 / SRS30216), this protein is DNA-directed RNA polymerase subunit beta.